The chain runs to 804 residues: General transcription and DNA repair factor IIH helicase/translocase subunit XPB (804 aa).

2 disordered regions span residues 1–61 (MSLK…NSNE) and 220–255 (QSSKQKSSKPSNEDNVEDKKDITNDSSKETAEKSSS). Positions 14-36 (PDEDLEEYSDYSDVDNYGEEDDD) are enriched in acidic residues. Composition is skewed to low complexity over residues 47 to 60 (NNNKTKAQTTTNSN) and 220 to 229 (QSSKQKSSKP). Over residues 236–255 (EDKKDITNDSSKETAEKSSS) the composition is skewed to basic and acidic residues. Positions 335 to 497 (MFGNGRARSG…DLNFLIGPKM (163 aa)) constitute a Helicase ATP-binding domain. 348–355 (LPCGAGKT) provides a ligand contact to ATP. The short motif at 450 to 453 (DEVH) is the DEVH box element. The region spanning 551–705 (QACQFLIDYH…KVITNLKGME (155 aa)) is the Helicase C-terminal domain. 2 disordered regions span residues 736–761 (DDGEDTSFGSRSLSRAPAKAKRSSGS) and 782–804 (KQLKKDSKEHHALFRKHLYTKRR). Residues 784 to 793 (LKKDSKEHHA) show a composition bias toward basic and acidic residues. Positions 794–804 (LFRKHLYTKRR) are enriched in basic residues.

It belongs to the helicase family. RAD25/XPB subfamily. As to quaternary structure, component of the 7-subunit TFIIH core complex composed of XPB/ptr8, XPD/rad15, ssl1, tfb1, tfb2, tfb4 and tfb5, which is active in NER. The core complex associates with the 3-subunit CTD-kinase module TFIIK composed of mcs2/cyclin H, mcs6/cdk7 and pmh1/tfb3 to form the 10-subunit holoenzyme (holo-TFIIH) active in transcription.

It localises to the nucleus. The enzyme catalyses Couples ATP hydrolysis with the unwinding of duplex DNA by translocating in the 3'-5' direction.. It catalyses the reaction ATP + H2O = ADP + phosphate + H(+). Its function is as follows. Probable ATP-dependent 3'-5' DNA helicase/translocase. Binds dsDNA rather than ssDNA, unzipping it in a translocase rather than classical helicase activity. Component of the general transcription and DNA repair factor IIH (TFIIH) core complex. When complexed to CDK-activating kinase (CAK), involved in RNA transcription by RNA polymerase II. Also involved in transcription-coupled nucleotide excision repair (NER) of damaged DNA. In NER, TFIIH acts by opening DNA around the lesion to allow the excision of the damaged oligonucleotide and its replacement by a new DNA fragment. The ATPase activity of XPB/ptr8, but not its helicase activity, is required for DNA opening. In transcription, TFIIH has an essential role in transcription initiation. When the pre-initiation complex (PIC) has been established, TFIIH is required for promoter opening and promoter escape. The ATP-dependent helicase activity of XPB/ptr8 is required for promoter escape but not for promoter opening. Plays a role in mRNA export. In Schizosaccharomyces pombe (strain 972 / ATCC 24843) (Fission yeast), this protein is General transcription and DNA repair factor IIH helicase/translocase subunit XPB.